The chain runs to 395 residues: S-adenosylmethionine synthase (395 aa).

His-19 contacts ATP. Asp-21 is a binding site for Mg(2+). Glu-47 serves as a coordination point for K(+). Residues Glu-60 and Gln-103 each contribute to the L-methionine site. The interval 103–113 is flexible loop; the sequence is QSPDIAQGVNS. ATP-binding positions include 170–172, 236–237, Asp-245, 251–252, Ala-268, and Lys-272; these read DNK, KF, and RK. Residue Asp-245 participates in L-methionine binding. L-methionine is bound at residue Lys-276.

It belongs to the AdoMet synthase family. Homotetramer; dimer of dimers. Mg(2+) is required as a cofactor. Requires K(+) as cofactor.

The protein localises to the cytoplasm. The catalysed reaction is L-methionine + ATP + H2O = S-adenosyl-L-methionine + phosphate + diphosphate. It functions in the pathway amino-acid biosynthesis; S-adenosyl-L-methionine biosynthesis; S-adenosyl-L-methionine from L-methionine: step 1/1. In terms of biological role, catalyzes the formation of S-adenosylmethionine (AdoMet) from methionine and ATP. The overall synthetic reaction is composed of two sequential steps, AdoMet formation and the subsequent tripolyphosphate hydrolysis which occurs prior to release of AdoMet from the enzyme. The chain is S-adenosylmethionine synthase from Rhodopirellula baltica (strain DSM 10527 / NCIMB 13988 / SH1).